The chain runs to 609 residues: MCGIFGYIGAKLAVPVVLDGLAKLEYRGYDSAGLAAVIPERLFVRKTVGRVDELRSSLEKENVPSSLAIGHTRWATHGVPTVKNAHPHVDENSACAIVHNGIIDNFKELRSLLISEGISFSSDTDSEVIAQLFAFRYQATGDLVHSFSWTLSQLQGSFSCGLIHKDHPNVLLCAAQESPLIIGLGEKESFIASDARAFLKHTKSIQALASGELAVVGLGSEVETYNFALKRIHKEVRQVVYTDADSDKQGYSYYMLKEIYEQPEVLERLIHKYLDQQGCISEKFLNGFSIEDFDEISIVACGSSYHAGFLAKYIIESLVSIPVHVEVASEFRYRQAYIGKKTLAILISQSGETADTLAALKEFRRRQVACVLGICNVEESALATGVDHCLFLEAGIEIGVASTKAFTAQLLLLILLGLKLATLKQTLSLEEHRACGKGLFELPELCNRLLANENLHSWANDYCDEDRFIFLGRRLMYPICMEAALKLKEIAYVEANCYPAGEMKHGPIALISQGSPVITFCGDPVVYEKMVGCIMEVKARQAHVIAVASESQEDIAAVSDAQIYVPNSHPLVSPILYTIVGQIMAYTMALKKGYEIDRPRNLAKSVTVE.

Residue Cys-2 is the Nucleophile; for GATase activity of the active site. The 218-residue stretch at Cys-2–Gly-219 folds into the Glutamine amidotransferase type-2 domain. 2 consecutive SIS domains span residues Ile-280–Thr-426 and Trp-458–Pro-599. Lys-604 acts as the For Fru-6P isomerization activity in catalysis.

In terms of assembly, homodimer.

It is found in the cytoplasm. The catalysed reaction is D-fructose 6-phosphate + L-glutamine = D-glucosamine 6-phosphate + L-glutamate. Its function is as follows. Catalyzes the first step in hexosamine metabolism, converting fructose-6P into glucosamine-6P using glutamine as a nitrogen source. The protein is Glutamine--fructose-6-phosphate aminotransferase [isomerizing] of Chlamydia caviae (strain ATCC VR-813 / DSM 19441 / 03DC25 / GPIC) (Chlamydophila caviae).